We begin with the raw amino-acid sequence, 243 residues long: Ribosomal RNA small subunit methyltransferase G (243 aa).

S-adenosyl-L-methionine is bound by residues Gly79, Phe84, 130–131 (AE), and Arg150. Residues 222–243 (KPTPNKYPRKPGIPNKQPLGGA) form a disordered region.

Belongs to the methyltransferase superfamily. RNA methyltransferase RsmG family.

The protein localises to the cytoplasm. Specifically methylates the N7 position of a guanine in 16S rRNA. The protein is Ribosomal RNA small subunit methyltransferase G of Lacticaseibacillus paracasei (strain ATCC 334 / BCRC 17002 / CCUG 31169 / CIP 107868 / KCTC 3260 / NRRL B-441) (Lactobacillus paracasei).